The following is a 232-amino-acid chain: Orotidine 5'-phosphate decarboxylase (232 aa).

Substrate is bound by residues D11, K33, D60 to T69, T120, R181, Q190, G210, and R211. Catalysis depends on K62, which acts as the Proton donor.

It belongs to the OMP decarboxylase family. Type 1 subfamily. In terms of assembly, homodimer.

The catalysed reaction is orotidine 5'-phosphate + H(+) = UMP + CO2. Its pathway is pyrimidine metabolism; UMP biosynthesis via de novo pathway; UMP from orotate: step 2/2. Functionally, catalyzes the decarboxylation of orotidine 5'-monophosphate (OMP) to uridine 5'-monophosphate (UMP). The protein is Orotidine 5'-phosphate decarboxylase of Vibrio vulnificus (strain CMCP6).